A 408-amino-acid polypeptide reads, in one-letter code: Beta-ureidopropionase (408 aa).

Residues 90-360 (VRVGLIQNSI…DGLLISDMDL (271 aa)) form the CN hydrolase domain. E137 functions as the Proton acceptor in the catalytic mechanism. The Proton donor role is filled by K212. Residue C249 is the Nucleophile of the active site.

This sequence belongs to the carbon-nitrogen hydrolase superfamily. BUP family. As to quaternary structure, homodimer, homotetramer, homooctamer; can also form higher homooligomers.

It is found in the cytoplasm. It catalyses the reaction 3-(carbamoylamino)propanoate + H2O + 2 H(+) = beta-alanine + NH4(+) + CO2. The catalysed reaction is 3-(carbamoylamino)-2-methylpropanoate + H2O + 2 H(+) = (R)-3-amino-2-methylpropanoate + NH4(+) + CO2. It participates in amino-acid biosynthesis; beta-alanine biosynthesis. Its function is as follows. Catalyzes a late step in pyrimidine degradation. Converts N-carbamoyl-beta-aminoisobutyrate and N-carbamoyl-beta-alanine (3-ureidopropanoate) to, respectively, beta-aminoisobutyrate and beta-alanine, ammonia and carbon dioxide. Involved in the recycling of nitrogen from nucleobases to general nitrogen metabolism. The sequence is that of Beta-ureidopropionase from Arabidopsis thaliana (Mouse-ear cress).